The sequence spans 468 residues: Probable Xaa-Pro aminopeptidase PEPP (468 aa).

The Mn(2+) site is built by Asp264, Asp275, Glu398, and Glu438.

It belongs to the peptidase M24B family. Requires Mn(2+) as cofactor.

It catalyses the reaction Release of any N-terminal amino acid, including proline, that is linked to proline, even from a dipeptide or tripeptide.. In terms of biological role, catalyzes the removal of a penultimate prolyl residue from the N-termini of peptides. The sequence is that of Probable Xaa-Pro aminopeptidase PEPP (PEPP) from Paracoccidioides brasiliensis (strain Pb03).